A 185-amino-acid polypeptide reads, in one-letter code: Ribosome-recycling factor (185 aa).

This sequence belongs to the RRF family.

It is found in the cytoplasm. In terms of biological role, responsible for the release of ribosomes from messenger RNA at the termination of protein biosynthesis. May increase the efficiency of translation by recycling ribosomes from one round of translation to another. The protein is Ribosome-recycling factor of Laribacter hongkongensis (strain HLHK9).